A 177-amino-acid polypeptide reads, in one-letter code: Inner membrane-spanning protein YciB (177 aa).

The next 5 membrane-spanning stretches (helical) occupy residues 22–42 (IFIA…LYWI), 50–70 (INLF…IFHN), 76–96 (WKIT…QFFM), 121–141 (FFWA…ALCL), and 151–171 (VFGL…YINF).

Belongs to the YciB family.

The protein localises to the cell inner membrane. In terms of biological role, plays a role in cell envelope biogenesis, maintenance of cell envelope integrity and membrane homeostasis. The chain is Inner membrane-spanning protein YciB from Buchnera aphidicola subsp. Schizaphis graminum (strain Sg).